The chain runs to 202 residues: Small ribosomal subunit protein uS4 (202 aa).

An S4 RNA-binding domain is found at 94-157 (SRLDNLVYRM…KDLPIVAAGA (64 aa)).

It belongs to the universal ribosomal protein uS4 family. In terms of assembly, part of the 30S ribosomal subunit. Contacts protein S5. The interaction surface between S4 and S5 is involved in control of translational fidelity.

Its function is as follows. One of the primary rRNA binding proteins, it binds directly to 16S rRNA where it nucleates assembly of the body of the 30S subunit. Functionally, with S5 and S12 plays an important role in translational accuracy. In Malacoplasma penetrans (strain HF-2) (Mycoplasma penetrans), this protein is Small ribosomal subunit protein uS4.